The following is a 35-amino-acid chain: Anti-H(O) lectin 3 (35 aa).

This sequence belongs to the leguminous lectin family. Homodimer. Post-translationally, highly glycosylated.

Functionally, binds lactose or galactose. The polypeptide is Anti-H(O) lectin 3 (Ulex europaeus (Furze)).